The following is a 1485-amino-acid chain: Dicer-like protein 2 (1485 aa).

Residues 1–11 (MSSQDESASSS) are compositionally biased toward low complexity. Residues 1 to 61 (MSSQDESASS…EPQPSGNGPR (61 aa)) are disordered. One can recognise a Helicase ATP-binding domain in the interval 72–250 (MFQASMQQNI…MEDLESSLDS (179 aa)). 85 to 92 (MDTGSGKT) serves as a coordination point for ATP. Positions 193–196 (DEAH) match the DEAH box motif. One can recognise a Helicase C-terminal domain in the interval 415 to 579 (KLQVLLRILR…RYENDMRELD (165 aa)). A Dicer dsRNA-binding fold domain is found at 609-712 (AKGHLEHFCR…LPIRESDFVD (104 aa)). RNase III domains follow at residues 988 to 1127 (AQEL…IEGG) and 1168 to 1358 (LGPL…VDSG). Residues Glu1208, Asp1344, and Glu1347 each coordinate Mg(2+). In terms of domain architecture, DRBM spans 1388–1469 (HPKEELGRVA…ALEVIRVWEE (82 aa)).

The protein belongs to the helicase family. Dicer subfamily. Mg(2+) serves as cofactor. Requires Mn(2+) as cofactor.

In terms of biological role, dicer-like endonuclease involved in cleaving double-stranded RNA in the RNA interference (RNAi) pathway. Produces 21 to 25 bp dsRNAs (siRNAs) which target the selective destruction of homologous RNAs leading to sequence-specific suppression of gene expression, called post-transcriptional gene silencing (PTGS). Part of a broad host defense response against viral infection and transposons. This is Dicer-like protein 2 (DCL2) from Pyricularia oryzae (strain 70-15 / ATCC MYA-4617 / FGSC 8958) (Rice blast fungus).